An 86-amino-acid chain; its full sequence is Immunity protein CdiI-1 (86 aa).

Interacts with the C-terminal fragment (CT) of cognate toxin protein CdiA-EC869.

Immunity protein component of a toxin-immunity protein module, which functions as a cellular contact-dependent growth inhibition (CDI) system. CDI modules allow bacteria to communicate with and inhibit the growth of closely related neighboring bacteria in a contact-dependent fashion. Neutralizes the toxic activity of cognate toxin CdiA-EC869 (the C-terminal 289 residue CT fragment). Does not inhibit toxic activity of CdiA from other toxin-immunity modules or strains of E.coli. The polypeptide is Immunity protein CdiI-1 (Escherichia coli O157:H7 (strain EC869)).